Here is a 275-residue protein sequence, read N- to C-terminus: Formamidopyrimidine-DNA glycosylase (275 aa).

The active-site Schiff-base intermediate with DNA is P2. E3 functions as the Proton donor in the catalytic mechanism. The active-site Proton donor; for beta-elimination activity is K58. Positions 91 and 110 each coordinate DNA. The FPG-type zinc-finger motif lies at 238–272; it reads QVYGQTGKPCPRCGQAIVKLKVGGRGTHICPKCQK. The active-site Proton donor; for delta-elimination activity is the R262.

Belongs to the FPG family. Monomer. Requires Zn(2+) as cofactor.

It carries out the reaction Hydrolysis of DNA containing ring-opened 7-methylguanine residues, releasing 2,6-diamino-4-hydroxy-5-(N-methyl)formamidopyrimidine.. The enzyme catalyses 2'-deoxyribonucleotide-(2'-deoxyribose 5'-phosphate)-2'-deoxyribonucleotide-DNA = a 3'-end 2'-deoxyribonucleotide-(2,3-dehydro-2,3-deoxyribose 5'-phosphate)-DNA + a 5'-end 5'-phospho-2'-deoxyribonucleoside-DNA + H(+). In terms of biological role, involved in base excision repair of DNA damaged by oxidation or by mutagenic agents. Acts as a DNA glycosylase that recognizes and removes damaged bases. Has a preference for oxidized purines, such as 7,8-dihydro-8-oxoguanine (8-oxoG). Has AP (apurinic/apyrimidinic) lyase activity and introduces nicks in the DNA strand. Cleaves the DNA backbone by beta-delta elimination to generate a single-strand break at the site of the removed base with both 3'- and 5'-phosphates. This Streptococcus pyogenes serotype M6 (strain ATCC BAA-946 / MGAS10394) protein is Formamidopyrimidine-DNA glycosylase.